The following is a 223-amino-acid chain: UPF0758 protein FMG_0357 (223 aa).

Residues 101–223 (SLNDPDSVAE…SLSMRKGMYF (123 aa)) enclose the MPN domain. Positions 172, 174, and 185 each coordinate Zn(2+). Positions 172 to 185 (HNHPSGSLIPSNAD) match the JAMM motif motif.

This sequence belongs to the UPF0758 family.

The protein is UPF0758 protein FMG_0357 of Finegoldia magna (strain ATCC 29328 / DSM 20472 / WAL 2508) (Peptostreptococcus magnus).